The chain runs to 594 residues: Proteasome-associated ATPase (594 aa).

Positions 20–98 (DDLAAQVTYL…KEEIDRLAQP (79 aa)) form a coiled coil. 282-287 (GCGKTL) provides a ligand contact to ATP. The segment at 593–594 (YL) is docks into pockets in the proteasome alpha-ring.

It belongs to the AAA ATPase family. As to quaternary structure, homohexamer. Assembles into a hexameric ring structure that caps the 20S proteasome core. Strongly interacts with the prokaryotic ubiquitin-like protein Pup through a hydrophobic interface; the interacting region of ARC lies in its N-terminal coiled-coil domain. There is one Pup binding site per ARC hexamer ring. Upon ATP-binding, the C-terminus of ARC interacts with the alpha-rings of the proteasome core, possibly by binding to the intersubunit pockets.

Its pathway is protein degradation; proteasomal Pup-dependent pathway. ATPase which is responsible for recognizing, binding, unfolding and translocation of pupylated proteins into the bacterial 20S proteasome core particle. May be essential for opening the gate of the 20S proteasome via an interaction with its C-terminus, thereby allowing substrate entry and access to the site of proteolysis. Thus, the C-termini of the proteasomal ATPase may function like a 'key in a lock' to induce gate opening and therefore regulate proteolysis. In Catenulispora acidiphila (strain DSM 44928 / JCM 14897 / NBRC 102108 / NRRL B-24433 / ID139908), this protein is Proteasome-associated ATPase.